Consider the following 270-residue polypeptide: Dihydroorotate dehydrogenase B (NAD(+)), catalytic subunit (270 aa).

Residues serine 12 and 35–36 (KT) each bind FMN. Residues lysine 35, 59-63 (NRIGL), and asparagine 114 each bind substrate. Asparagine 114 serves as a coordination point for FMN. The Nucleophile role is filled by cysteine 117. The FMN site is built by lysine 153 and valine 179. 180–181 (NT) lines the substrate pocket. Residues glycine 199, 226–227 (GG), and 248–249 (GS) each bind FMN.

Belongs to the dihydroorotate dehydrogenase family. Type 1 subfamily. In terms of assembly, heterotetramer of 2 PyrK and 2 PyrD type B subunits. The cofactor is FMN.

It localises to the cytoplasm. It catalyses the reaction (S)-dihydroorotate + NAD(+) = orotate + NADH + H(+). It functions in the pathway pyrimidine metabolism; UMP biosynthesis via de novo pathway; orotate from (S)-dihydroorotate (NAD(+) route): step 1/1. Catalyzes the conversion of dihydroorotate to orotate with NAD(+) as electron acceptor. This chain is Dihydroorotate dehydrogenase B (NAD(+)), catalytic subunit (pyrD), found in Thermotoga maritima (strain ATCC 43589 / DSM 3109 / JCM 10099 / NBRC 100826 / MSB8).